The primary structure comprises 259 residues: Gasdermin bGSDM (259 aa).

The S-palmitoyl cysteine moiety is linked to residue cysteine 3. The next 4 membrane-spanning stretches (beta stranded) occupy residues 70 to 86 (FQFR…AASV), 98 to 116 (SGSF…IQLS), 162 to 179 (GIRI…DLSA), and 187 to 203 (AKAK…SYAF). The tract at residues 244–259 (PFAFIGDDAFVDLPES) is C-terminal region.

This sequence belongs to the bacterial gasdermin family. As to quaternary structure, monomer in solution. Forms large, homooligomeric ring-shaped pores when inserted in membranes. Post-translationally, palmitoylation helps stabilize the inactive state; may self palmitoylate. Palmitoylation plays a significant role in pore formation.

The protein resides in the cytoplasm. The protein localises to the cell inner membrane. With respect to regulation, the full-length protein before cleavage is inactive: intramolecular interactions between the N-terminal domain and the C-terminal region as well as the lipid modification, mediate autoinhibition. The pyroptosis-like-inducing activity is carried by the released N-terminal domain (Gasdermin bGSDM, N-terminus). Functionally, precursor of a pore-forming protein involved in defense against bacteriophages. Expression of bGSDM and the neighboring protease gene (Ga0098714_109514) is toxic in E.coli on solid medium. Cleavage of this precursor by its dedicated protease releases the active moiety (gasdermin bGSDM, N-terminus) which inserts into membranes, forming pores and triggering cell death. Its function is as follows. Pore-forming protein that causes membrane permeabilization via a pyroptosis-like activity. Makes ring-like pores when released. The protein is Gasdermin bGSDM of Bradyrhizobium tropiciagri.